A 253-amino-acid chain; its full sequence is Demethylmenaquinone methyltransferase (253 aa).

S-adenosyl-L-methionine is bound by residues Thr-62, Asp-80, 102 to 103, and Ser-119; that span reads DA.

The protein belongs to the class I-like SAM-binding methyltransferase superfamily. MenG/UbiE family.

It carries out the reaction a 2-demethylmenaquinol + S-adenosyl-L-methionine = a menaquinol + S-adenosyl-L-homocysteine + H(+). The protein operates within quinol/quinone metabolism; menaquinone biosynthesis; menaquinol from 1,4-dihydroxy-2-naphthoate: step 2/2. Functionally, methyltransferase required for the conversion of demethylmenaquinol (DMKH2) to menaquinol (MKH2). This chain is Demethylmenaquinone methyltransferase, found in Paenarthrobacter aurescens (strain TC1).